We begin with the raw amino-acid sequence, 622 residues long: MALLQISEPGQSPDPHQRRVAIGIDLGTTHSLVAAVRNGVAECLPDAQGRVLLPSVVRYLGGGGRQIGYEAAAAQMQDPANTVSSVKRFMGRGLGDITGREKLPYDFIAAADSGGMLSLSTAAGVKSPVEVSAEILATLRYRAEDSFDSDLYGAVITVPAYFDDAQRQATKDAAHLAGLNLLRLINEPTAAAIAYGLDNGAEGVYAVYDLGGGTFDISVLRLAQGVFEVIATGGDSALGGDDYDAALAEWVMQQTGVRASTPEDKTSVRLAARACKEALTATDNVAFTADVAGATVQFDVKREDFAAVTAELTQRSLAAVRRTLRDAQIERDEVKGVVLVGGSTRMPVVRAAVAEFFGREPLTNLNPDEVVAIGAAIQANQLAGNDAAGDLLLLDVIPLSLGIETMGGLVERIIGRNETIPTAKAQDFTTYKDGQTALAIHVVQGERDLVQDCRSLARFELRGIPPMAAGAARIRVTFTVDADGLLSVAAREQASGVEARIDVKPSYGLSDEQIARMLQEGFATAQQDMQTRALVEARVDADRLLIATQSALDVDGDVLAAAERTAIDDLMHALRATLETSTDAAAVEAAAQALAKGTEAFAAQRMNRGIRQALAGKNVSAL.

The protein belongs to the heat shock protein 70 family.

In terms of biological role, chaperone involved in the maturation of iron-sulfur cluster-containing proteins. Has a low intrinsic ATPase activity which is markedly stimulated by HscB. This chain is Chaperone protein HscA homolog, found in Acidovorax ebreus (strain TPSY) (Diaphorobacter sp. (strain TPSY)).